A 447-amino-acid chain; its full sequence is Beta-glucuronosyltransferase GlcAT14A (447 aa).

The Cytoplasmic segment spans residues 1–33 (MKKLRSYYSNVRHHQNHHHHHHHHSNIVSSERK). The chain crosses the membrane as a helical; Signal-anchor for type II membrane protein span at residues 34–54 (WIFFPLLIGSIFALFLLFLTT). Over 55–447 (TLTSPTGGVR…TENFRSKQCK (393 aa)) the chain is Lumenal. Asn151, Asn200, Asn329, and Asn405 each carry an N-linked (GlcNAc...) asparagine glycan.

The protein belongs to the glycosyltransferase 14 family.

It is found in the golgi apparatus membrane. Functionally, beta-glucuronosyltransferase involved in the biosynthesis of type II arabinogalactan (AG). Modifies both the beta-1,6-linked galactan and beta-1,3-linked galactan present in type II AG. Transfers glucuronate to beta-1,6-galactooligosaccharides with degrees of polymerization ranging from 3 to 11. Transfers glucuronate to beta-1,3-galactooligosaccharides with degrees of polymerization ranging from 5 to 7. The addition of glucuronate at the O6 position may terminate galactose chain extension. Required for cell elongation during seedling growth. In Arabidopsis thaliana (Mouse-ear cress), this protein is Beta-glucuronosyltransferase GlcAT14A.